The sequence spans 358 residues: Glutamate 5-kinase (358 aa).

Lys9 is an ATP binding site. The substrate site is built by Ser49, Asp136, and Asn148. ATP is bound by residues Thr168–Asp169 and Thr210–Lys216. Residues Asp275–Asn353 enclose the PUA domain.

Belongs to the glutamate 5-kinase family.

The protein resides in the cytoplasm. It carries out the reaction L-glutamate + ATP = L-glutamyl 5-phosphate + ADP. It functions in the pathway amino-acid biosynthesis; L-proline biosynthesis; L-glutamate 5-semialdehyde from L-glutamate: step 1/2. Catalyzes the transfer of a phosphate group to glutamate to form L-glutamate 5-phosphate. In Streptococcus suis (strain 05ZYH33), this protein is Glutamate 5-kinase.